Reading from the N-terminus, the 437-residue chain is UPF0597 protein Shal_0864 (437 aa).

The protein belongs to the UPF0597 family.

The chain is UPF0597 protein Shal_0864 from Shewanella halifaxensis (strain HAW-EB4).